Here is an 83-residue protein sequence, read N- to C-terminus: MADATEKAEHDRIFKKFDANGDGKISASELGDALKNLGSVTHDDIKRMMAEIDTDGDGYISYQEFSDFASANRGLMKDVAKIF.

EF-hand domains follow at residues 5–40 (TEKA…LGSV) and 43–75 (DDIK…NRGL). The Ca(2+) site is built by Asp18, Asn20, Asp22, Lys24, Glu29, Asp53, Asp55, Asp57, Tyr59, and Glu64.

This Brassica campestris (Field mustard) protein is Polcalcin Bra r 2.